The sequence spans 354 residues: DNA polymerase IV (354 aa).

Positions 6-187 (IIHIDCDCFY…LPVTKLHGVG (182 aa)) constitute a UmuC domain. Residues aspartate 10 and aspartate 105 each contribute to the Mg(2+) site. Glutamate 106 is an active-site residue.

The protein belongs to the DNA polymerase type-Y family. Monomer. Mg(2+) is required as a cofactor.

The protein localises to the cytoplasm. The catalysed reaction is DNA(n) + a 2'-deoxyribonucleoside 5'-triphosphate = DNA(n+1) + diphosphate. Functionally, poorly processive, error-prone DNA polymerase involved in untargeted mutagenesis. Copies undamaged DNA at stalled replication forks, which arise in vivo from mismatched or misaligned primer ends. These misaligned primers can be extended by PolIV. Exhibits no 3'-5' exonuclease (proofreading) activity. May be involved in translesional synthesis, in conjunction with the beta clamp from PolIII. The protein is DNA polymerase IV of Pseudomonas syringae pv. syringae (strain B728a).